Here is a 324-residue protein sequence, read N- to C-terminus: Alkanal monooxygenase beta chain (324 aa).

It belongs to the bacterial luciferase oxidoreductase family. As to quaternary structure, heterodimer of an alpha and a beta chain.

The catalysed reaction is a long-chain fatty aldehyde + FMNH2 + O2 = a long-chain fatty acid + hnu + FMN + H2O + 2 H(+). In terms of biological role, light-emitting reaction in luminous bacteria. The specific role of the beta subunit is unknown, but it is absolutely required for bioluminescence activity. The chain is Alkanal monooxygenase beta chain (luxB) from Photorhabdus laumondii subsp. laumondii (strain DSM 15139 / CIP 105565 / TT01) (Photorhabdus luminescens subsp. laumondii).